The primary structure comprises 529 residues: Bifunctional purine biosynthesis protein PurH (529 aa).

Positions 1-146 constitute an MGS-like domain; the sequence is MAPTALLSVS…KNHAHVAVLT (146 aa).

It belongs to the PurH family.

The catalysed reaction is (6R)-10-formyltetrahydrofolate + 5-amino-1-(5-phospho-beta-D-ribosyl)imidazole-4-carboxamide = 5-formamido-1-(5-phospho-D-ribosyl)imidazole-4-carboxamide + (6S)-5,6,7,8-tetrahydrofolate. It catalyses the reaction IMP + H2O = 5-formamido-1-(5-phospho-D-ribosyl)imidazole-4-carboxamide. Its pathway is purine metabolism; IMP biosynthesis via de novo pathway; 5-formamido-1-(5-phospho-D-ribosyl)imidazole-4-carboxamide from 5-amino-1-(5-phospho-D-ribosyl)imidazole-4-carboxamide (10-formyl THF route): step 1/1. The protein operates within purine metabolism; IMP biosynthesis via de novo pathway; IMP from 5-formamido-1-(5-phospho-D-ribosyl)imidazole-4-carboxamide: step 1/1. The sequence is that of Bifunctional purine biosynthesis protein PurH from Synechococcus sp. (strain CC9311).